The primary structure comprises 445 residues: Ribosomal protein uS12 methylthiotransferase RimO (445 aa).

Positions 6 to 121 constitute an MTTase N-terminal domain; that stretch reads KKVAVVTLGC…ILETLEEAEK (116 aa). Residues Cys-15, Cys-50, Cys-84, Cys-159, Cys-163, and Cys-166 each contribute to the [4Fe-4S] cluster site. Positions 145–375 constitute a Radical SAM core domain; that stretch reads LSPKQYAYVK…MELQHDIAYE (231 aa). The TRAM domain maps to 378–445; it reads QRWVGQTLKV…SYDLMGEVVQ (68 aa).

The protein belongs to the methylthiotransferase family. RimO subfamily. The cofactor is [4Fe-4S] cluster.

Its subcellular location is the cytoplasm. The catalysed reaction is L-aspartate(89)-[ribosomal protein uS12]-hydrogen + (sulfur carrier)-SH + AH2 + 2 S-adenosyl-L-methionine = 3-methylsulfanyl-L-aspartate(89)-[ribosomal protein uS12]-hydrogen + (sulfur carrier)-H + 5'-deoxyadenosine + L-methionine + A + S-adenosyl-L-homocysteine + 2 H(+). In terms of biological role, catalyzes the methylthiolation of an aspartic acid residue of ribosomal protein uS12. This Desulfitobacterium hafniense (strain Y51) protein is Ribosomal protein uS12 methylthiotransferase RimO.